A 678-amino-acid chain; its full sequence is WD repeat-containing protein 48 (678 aa).

WD repeat units follow at residues 28-67 (YNRN…QDPY), 73-112 (HHTD…CMST), 115-154 (THKD…ALTA), 166-205 (GNKD…KLMK), 208-247 (GHTD…CIAT), 250-289 (VHDE…IRLL), 292-334 (EEKA…NFRS), and 358-397 (KGGA…KVED). The interval 608–629 (VDTESQTTSSSNNEKPGEQEKE) is disordered. A compositionally biased stretch (low complexity) spans 610 to 621 (TESQTTSSSNNE).

This sequence belongs to the WD repeat WDR48 family.

The protein localises to the nucleus. It is found in the cytoplasm. The protein resides in the lysosome. It localises to the late endosome. Regulator of deubiquitinating complexes, which acts as a strong activator of usp1, usp12 and usp46. Enhances the usp1-mediated deubiquitination of fancd2; usp1 being almost inactive by itself. Activates deubiquitination by increasing the catalytic turnover without increasing the affinity of deubiquitinating enzymes for the substrate. Also activates deubiquitinating activity of complexes containing usp12. Together with rad51ap1, promotes DNA repair by stimulating rad51-mediated homologous recombination. Binds single-stranded DNA (ssDNA) and double-stranded DNA (dsDNA). DNA-binding is required both for usp1-mediated deubiquitination of fancd2 and stimulation of rad51-mediated homologous recombination: both wdr48/uaf1 and rad51ap1 have coordinated role in DNA-binding during these processes. Together with atad5 and by regulating usp1 activity, has a role in pcna-mediated translesion synthesis (TLS) by deubiquitinating monoubiquitinated pcna. Together with atad5, has a role in recruiting rad51 to stalled forks during replication stress. The polypeptide is WD repeat-containing protein 48 (wdr48) (Xenopus tropicalis (Western clawed frog)).